A 91-amino-acid chain; its full sequence is DNA-directed RNA polymerase subunit omega (91 aa).

This sequence belongs to the RNA polymerase subunit omega family. In terms of assembly, the RNAP catalytic core consists of 2 alpha, 1 beta, 1 beta' and 1 omega subunit. When a sigma factor is associated with the core the holoenzyme is formed, which can initiate transcription.

The enzyme catalyses RNA(n) + a ribonucleoside 5'-triphosphate = RNA(n+1) + diphosphate. Functionally, promotes RNA polymerase assembly. Latches the N- and C-terminal regions of the beta' subunit thereby facilitating its interaction with the beta and alpha subunits. The polypeptide is DNA-directed RNA polymerase subunit omega (Aeromonas hydrophila subsp. hydrophila (strain ATCC 7966 / DSM 30187 / BCRC 13018 / CCUG 14551 / JCM 1027 / KCTC 2358 / NCIMB 9240 / NCTC 8049)).